The primary structure comprises 100 residues: Urease subunit gamma (100 aa).

The protein belongs to the urease gamma subunit family. As to quaternary structure, heterotrimer of UreA (gamma), UreB (beta) and UreC (alpha) subunits. Three heterotrimers associate to form the active enzyme.

The protein localises to the cytoplasm. The enzyme catalyses urea + 2 H2O + H(+) = hydrogencarbonate + 2 NH4(+). Its pathway is nitrogen metabolism; urea degradation; CO(2) and NH(3) from urea (urease route): step 1/1. The protein is Urease subunit gamma of Ralstonia pickettii (strain 12J).